A 379-amino-acid polypeptide reads, in one-letter code: DNA-directed RNA polymerase subunit Rpo1C (379 aa).

This sequence belongs to the RNA polymerase beta' chain family. As to quaternary structure, part of the RNA polymerase complex.

The protein localises to the cytoplasm. It catalyses the reaction RNA(n) + a ribonucleoside 5'-triphosphate = RNA(n+1) + diphosphate. Functionally, DNA-dependent RNA polymerase (RNAP) catalyzes the transcription of DNA into RNA using the four ribonucleoside triphosphates as substrates. Forms part of the jaw domain. This is DNA-directed RNA polymerase subunit Rpo1C from Pyrobaculum aerophilum (strain ATCC 51768 / DSM 7523 / JCM 9630 / CIP 104966 / NBRC 100827 / IM2).